The sequence spans 299 residues: Regucalcin (299 aa).

An a divalent metal cation-binding site is contributed by E18. Positions 101, 103, and 121 each coordinate substrate. N154 and D204 together coordinate a divalent metal cation. D204 serves as the catalytic Proton donor/acceptor. Residues K244 and K253 each carry the N6-succinyllysine modification.

Belongs to the SMP-30/CGR1 family. In terms of assembly, monomer. Requires Zn(2+) as cofactor. The cofactor is Mn(2+). It depends on Ca(2+) as a cofactor. Mg(2+) is required as a cofactor.

It localises to the cytoplasm. The enzyme catalyses D-glucono-1,5-lactone + H2O = D-gluconate + H(+). The protein operates within cofactor biosynthesis; L-ascorbate biosynthesis via UDP-alpha-D-glucuronate pathway; L-ascorbate from UDP-alpha-D-glucuronate: step 3/4. Gluconolactonase with low activity towards other sugar lactones, including gulonolactone and galactonolactone. Catalyzes a key step in ascorbic acid (vitamin C) biosynthesis. Can also hydrolyze diisopropyl phosphorofluoridate and phenylacetate (in vitro). Calcium-binding protein. Modulates Ca(2+) signaling, and Ca(2+)-dependent cellular processes and enzyme activities. This is Regucalcin (RGN) from Bos taurus (Bovine).